We begin with the raw amino-acid sequence, 727 residues long: MAFQKVVKGTILMGGGALATVLGLSQFAHYRRKQVSLAYVEAATCFSEPVNREPPSREAQLMTLQNTSEFDILVIGGGATGCGCALDAVTRGLKTALVERNDFASGTSSRSTKLIHGGVRYLQKAITNLDVEQYRMVKEALHERANLLEIAPHLSAPLPIMLPLYKWWQLPYYWVGIKMYDLVAGSHCLKSSYVLSKSRALEHFPMLQKDKLVGAIVYYDGQHNDARMNLAIALTAARYGAATANYMEVVSLLKKTDPETGKERVSGARCKDVLTGHEFNVRAKCVINATGPFTDSVRKMDDNDVVPICQPSAGVHIVMPGYYSPENMGLLDPATSDGRVIFFLPWEKMTIAGTTDSPTDVTHHPIPSEDDINFILNEVRNYLSCDVEVRRGDVLAAWSGIRPLVTDPKSANTQSISRNHVVEVSDSGLITIAGGKWTTYRSMAEDTVNKAVKLHNLNAGPSRTVGLFLQGGKDWSPTLYIRLVQDYGLESEVAQHLAKTYGDKAFDVAKMASVTGKRWPVVGVRLVSEFPYIEAEVKYGIKEYACTAVDMISRRTRLAFLNVQAAEEALPKIVELMGRELNWSELRKQEELETATRFLYYEMGYKSRTEQLTDSTEISLLPPDIDRYKKRFHMFDEDEKGFITIVDVQRVLESINVQMDEDTLHEILCEVDLNKNGQVELHEFLQLMSAVHTGRVSGSRLAILMKTAEENLDRRVPIPVDRSCGGL.

Residues 1–42 (MAFQKVVKGTILMGGGALATVLGLSQFAHYRRKQVSLAYVEA) constitute a mitochondrion transit peptide. 71–99 (DILVIGGGATGCGCALDAVTRGLKTALVE) provides a ligand contact to FAD. Tyr-601 is subject to Phosphotyrosine. 2 EF-hand domains span residues 623 to 658 (PDID…INVQ) and 659 to 694 (MDED…VHTG). Positions 672, 674, 676, 678, and 683 each coordinate Ca(2+).

The protein belongs to the FAD-dependent glycerol-3-phosphate dehydrogenase family. The cofactor is FAD.

Its subcellular location is the mitochondrion. It carries out the reaction a quinone + sn-glycerol 3-phosphate = dihydroxyacetone phosphate + a quinol. It participates in polyol metabolism; glycerol degradation via glycerol kinase pathway; glycerone phosphate from sn-glycerol 3-phosphate (anaerobic route): step 1/1. Its activity is regulated as follows. Calcium-binding enhance the activity of the enzyme. Functionally, calcium-responsive mitochondrial glycerol-3-phosphate dehydrogenase which seems to be a key component of the pancreatic beta-cell glucose-sensing device. The chain is Glycerol-3-phosphate dehydrogenase, mitochondrial from Rattus norvegicus (Rat).